The sequence spans 144 residues: Cytochrome c3 (144 aa).

An N-terminal signal peptide occupies residues Met-1–Ala-24. His-51, His-54, Cys-59, Cys-62, His-63, His-64, Cys-76, Cys-81, His-82, His-100, Cys-108, Cys-111, His-112, Cys-125, Cys-128, and His-129 together coordinate heme c.

The protein belongs to the cytochrome c family. As to quaternary structure, homodimer. Heterotrimer of cytochrome c3 FDH2C and formate dehydrogenase FDH2 alpha and beta subunits that forms the FdhABC(3) complex. Binds 4 heme c groups per subunit.

The protein localises to the periplasm. In terms of biological role, participates in sulfate respiration coupled with phosphorylation by transferring electrons from the enzyme dehydrogenase to ferredoxin. Gamma chain of the formate dehydrogenase (FDH) that catalyzes the reversible two-electron oxidation of formate to carbon dioxide. The gamma subunit of formate dehydrogenase forms a c-type heme. This is Cytochrome c3 from Nitratidesulfovibrio vulgaris (strain ATCC 29579 / DSM 644 / CCUG 34227 / NCIMB 8303 / VKM B-1760 / Hildenborough) (Desulfovibrio vulgaris).